The chain runs to 1174 residues: Pecanex-like protein 4 (1174 aa).

14 consecutive transmembrane segments (helical) span residues isoleucine 40 to leucine 60, alanine 72 to valine 92, threonine 140 to proline 160, threonine 173 to valine 193, leucine 217 to alanine 237, isoleucine 244 to proline 264, serine 284 to valine 304, phenylalanine 307 to leucine 327, phenylalanine 366 to valine 386, serine 394 to leucine 414, isoleucine 451 to leucine 471, leucine 543 to glutamate 563, valine 580 to leucine 600, and leucine 643 to serine 663. Positions proline 785–glutamate 797 are enriched in polar residues. The disordered stretch occupies residues proline 785–lysine 875. Asparagine 790 is a glycosylation site (N-linked (GlcNAc...) asparagine). A compositionally biased stretch (low complexity) spans alanine 798–proline 810. The span at proline 835–serine 846 shows a compositional bias: basic and acidic residues. 2 N-linked (GlcNAc...) asparagine glycosylation sites follow: asparagine 1122 and asparagine 1149.

The protein belongs to the pecanex family.

It is found in the membrane. The chain is Pecanex-like protein 4 from Mus musculus (Mouse).